Consider the following 447-residue polypeptide: Putative FBD-associated F-box protein At1g61330 (447 aa).

Residues 10–57 (KLIKRLSDELVECILSFLPVQSTLQHRVLSKRYRDTWKLSRDLDFSGI) enclose the F-box domain. An FBD domain is found at 384–416 (VKIIGYKGHWHELDIVEFFVKNAPSLKRLELQM).

This chain is Putative FBD-associated F-box protein At1g61330, found in Arabidopsis thaliana (Mouse-ear cress).